Here is a 549-residue protein sequence, read N- to C-terminus: Urocanate hydratase (549 aa).

Residues 46-47, glutamine 124, 170-172, glutamate 190, arginine 195, 236-237, 257-261, 267-268, and tyrosine 316 each bind NAD(+); these read GG, GMG, NA, QTSAH, and YV. Cysteine 404 is a catalytic residue. Residue glycine 486 coordinates NAD(+).

The protein belongs to the urocanase family. NAD(+) is required as a cofactor.

The protein resides in the cytoplasm. It catalyses the reaction 4-imidazolone-5-propanoate = trans-urocanate + H2O. It participates in amino-acid degradation; L-histidine degradation into L-glutamate; N-formimidoyl-L-glutamate from L-histidine: step 2/3. In terms of biological role, catalyzes the conversion of urocanate to 4-imidazolone-5-propionate. The sequence is that of Urocanate hydratase from Natranaerobius thermophilus (strain ATCC BAA-1301 / DSM 18059 / JW/NM-WN-LF).